A 276-amino-acid chain; its full sequence is 4-deoxy-L-threo-5-hexosulose-uronate ketol-isomerase (276 aa).

Zn(2+) is bound by residues histidine 194, histidine 196, glutamate 201, and histidine 243.

Belongs to the KduI family. It depends on Zn(2+) as a cofactor.

The catalysed reaction is 5-dehydro-4-deoxy-D-glucuronate = 3-deoxy-D-glycero-2,5-hexodiulosonate. The protein operates within glycan metabolism; pectin degradation; 2-dehydro-3-deoxy-D-gluconate from pectin: step 4/5. Catalyzes the isomerization of 5-dehydro-4-deoxy-D-glucuronate to 3-deoxy-D-glycero-2,5-hexodiulosonate. The protein is 4-deoxy-L-threo-5-hexosulose-uronate ketol-isomerase of Caldicellulosiruptor bescii (strain ATCC BAA-1888 / DSM 6725 / KCTC 15123 / Z-1320) (Anaerocellum thermophilum).